The primary structure comprises 373 residues: tRNA-specific 2-thiouridylase MnmA (373 aa).

ATP-binding positions include 7 to 14 and L33; that span reads AMSGGVDS. The active-site Nucleophile is C101. A disulfide bridge links C101 with C215. G125 contacts ATP. The segment at 165 to 167 is interaction with tRNA; the sequence is KDQ. C215 functions as the Cysteine persulfide intermediate in the catalytic mechanism.

This sequence belongs to the MnmA/TRMU family.

The protein localises to the cytoplasm. The catalysed reaction is S-sulfanyl-L-cysteinyl-[protein] + uridine(34) in tRNA + AH2 + ATP = 2-thiouridine(34) in tRNA + L-cysteinyl-[protein] + A + AMP + diphosphate + H(+). Catalyzes the 2-thiolation of uridine at the wobble position (U34) of tRNA, leading to the formation of s(2)U34. In Roseiflexus sp. (strain RS-1), this protein is tRNA-specific 2-thiouridylase MnmA.